The following is a 221-amino-acid chain: Urease accessory protein UreE (221 aa).

Positions 171–180 (HHGHDHDHGH) are enriched in basic and acidic residues. The tract at residues 171–221 (HHGHDHDHGHSHSHSHSHSHSHSHSHDHDHDHDHEHDVKGHVHGPGCGHKH) is disordered. Over residues 181–193 (SHSHSHSHSHSHS) the composition is skewed to basic residues. Basic and acidic residues predominate over residues 194-210 (HSHDHDHDHDHEHDVKG).

The protein belongs to the UreE family.

It is found in the cytoplasm. Involved in urease metallocenter assembly. Binds nickel. Probably functions as a nickel donor during metallocenter assembly. The protein is Urease accessory protein UreE of Cupriavidus pinatubonensis (strain JMP 134 / LMG 1197) (Cupriavidus necator (strain JMP 134)).